The primary structure comprises 353 residues: Trans-enoyl reductase eqxC (353 aa).

45 to 48 (VDTK) is a binding site for NADP(+). A substrate-binding site is contributed by 131 to 138 (ISFMTTGL). Residues 166-169 (SSAT), 189-192 (SPRN), tyrosine 207, and 254-255 (LE) each bind NADP(+). 275–279 (GPQML) is a binding site for substrate. 344–345 (IS) contributes to the NADP(+) binding site.

The protein belongs to the zinc-containing alcohol dehydrogenase family. As to quaternary structure, monomer.

The catalysed reaction is L-serine + 7 malonyl-CoA + acetyl-CoA + 2 S-adenosyl-L-methionine + ATP + 8 NADPH + 11 H(+) = (5S)-3-[(2E,6R,8E,10E,12E)-2,6-dimethyltetradeca-2,8,10,12-tetraenoyl]-5-(hydroxymethyl)pyrrolidine-2,4-dione + AMP + 2 S-adenosyl-L-homocysteine + 7 CO2 + diphosphate + 8 NADP(+) + 8 CoA + 6 H2O. It functions in the pathway mycotoxin biosynthesis. In terms of biological role, trans-enoyl reductase; part of the gene cluster that mediates the biosynthesis of equisetin, a trans-fused decalin-containing tetramic acid with antimicrobial activity. The PKS module of eqxS together with the enoylreductase eqxC catalyze the formation of the polyketide unit which is then conjugated to L-serine by the condensation domain of the eqxS NRPS module. Activity of the Dieckmann cyclase domain (RED) results in release of the Dieckmann product intermediate. Diels-Alderase eqx3 is involved in endo-selective Diels-Alder cycloaddition to form the decalin ring, leading to the production of N-desmethylequisetin also called trichosetin. Subsequent N-methylation is carried out by eqxD to give equisetin. The sequence is that of Trans-enoyl reductase eqxC from Fusarium heterosporum.